The sequence spans 577 residues: MNAFANVHSLRVPSHHLRDFSASLSLAPPNLKKIIKQCSTPKLLESALAAMIKTSLNQDCRLMNQFITACTSFKRLDLAVSTMTQMQEPNVFVYNALFKGFVTCSHPIRSLELYVRMLRDSVSPSSYTYSSLVKASSFASRFGESLQAHIWKFGFGFHVKIQTTLIDFYSATGRIREARKVFDEMPERDDIAWTTMVSAYRRVLDMDSANSLANQMSEKNEATSNCLINGYMGLGNLEQAESLFNQMPVKDIISWTTMIKGYSQNKRYREAIAVFYKMMEEGIIPDEVTMSTVISACAHLGVLEIGKEVHMYTLQNGFVLDVYIGSALVDMYSKCGSLERALLVFFNLPKKNLFCWNSIIEGLAAHGFAQEALKMFAKMEMESVKPNAVTFVSVFTACTHAGLVDEGRRIYRSMIDDYSIVSNVEHYGGMVHLFSKAGLIYEALELIGNMEFEPNAVIWGALLDGCRIHKNLVIAEIAFNKLMVLEPMNSGYYFLLVSMYAEQNRWRDVAEIRGRMRELGIEKICPGTSSIRIDKRDHLFAAADKSHSASDEVCLLLDEIYDQMGLAGYVQETENVY.

PPR repeat units lie at residues 59 to 89, 90 to 124, 125 to 155, 158 to 192, 193 to 219, 220 to 250, 251 to 285, 286 to 320, 321 to 351, 352 to 386, 387 to 417, and 423 to 453; these read DCRLMNQFITACTSFKRLDLAVSTMTQMQEP, NVFVYNALFKGFVTCSHPIRSLELYVRMLRDSVSP, SSYTYSSLVKASSFASRFGESLQAHIWKFGF, HVKIQTTLIDFYSATGRIREARKVFDEMPERDDIA, WTTMVSAYRRVLDMDSANSLANQMSEK, NEATSNCLINGYMGLGNLEQAESLFNQMPVK, DIISWTTMIKGYSQNKRYREAIAVFYKMMEEGIIP, DEVTMSTVISACAHLGVLEIGKEVHMYTLQNGFVL, DVYIGSALVDMYSKCGSLERALLVFFNLPKK, NLFCWNSIIEGLAAHGFAQEALKMFAKMEMESVKP, NAVTFVSVFTACTHAGLVDEGRRIYRSMIDD, and NVEHYGGMVHLFSKAGLIYEALELIGNMEFE. The type E motif stretch occupies residues 458–534; the sequence is IWGALLDGCR…CPGTSSIRID (77 aa). The segment at 535-565 is type E(+) motif; that stretch reads KRDHLFAAADKSHSASDEVCLLLDEIYDQMG.

Belongs to the PPR family. PCMP-E subfamily.

In Arabidopsis thaliana (Mouse-ear cress), this protein is Pentatricopeptide repeat-containing protein At1g06143 (EMB1444).